We begin with the raw amino-acid sequence, 60 residues long: U1-theraphotoxin-Agm3a (60 aa).

An N-terminal signal peptide occupies residues 1–21; the sequence is MKFSVLVFILGLVLLLALSSA. Positions 22 to 29 are excised as a propeptide; it reads TEMEENAR. Cystine bridges form between C31–C45, C38–C50, and C44–C57.

The protein belongs to the neurotoxin 10 (Hwtx-1) family. 63 (VsTx1) subfamily. As to expression, expressed by the venom gland.

Its subcellular location is the secreted. Functionally, inhibits sodium channels Nav1.7/SCN9A and potassium channels Kv11.1/KCNH2. Also binds the voltage-sensor domain of the potassium channel KvAP (from the archaeon Aeropyrum pernix) with very slow apparent binding kinetics and affects channel gating. Reaches its target by dynamically partitioning into anionic or zwitterionic headgroup lipid membranes. May bind to the open state of KvAP. This Acanthoscurria gomesiana (Tarantula spider) protein is U1-theraphotoxin-Agm3a.